Reading from the N-terminus, the 243-residue chain is Venom nerve growth factor (243 aa).

The signal sequence occupies residues 1-18 (MSMLCYTLIIVFLIGIWA). Residues 19–125 (APKSEDNVPL…TLNRNIRAKR (107 aa)) constitute a propeptide that is removed on maturation. A compositionally biased stretch (basic and acidic residues) spans 47 to 66 (GLKTSRNTDQRHPAPKKAED). The tract at residues 47–69 (GLKTSRNTDQRHPAPKKAEDQEL) is disordered. 3 disulfides stabilise this stretch: cysteine 139-cysteine 204, cysteine 182-cysteine 232, and cysteine 192-cysteine 234. A glycan (N-linked (GlcNAc...) asparagine) is linked at asparagine 148.

This sequence belongs to the NGF-beta family. As to quaternary structure, homodimer; non-covalently linked. In terms of tissue distribution, expressed by the venom gland.

Its subcellular location is the secreted. Its function is as follows. Nerve growth factor is important for the development and maintenance of the sympathetic and sensory nervous systems. It stimulates division and differentiation of sympathetic and embryonic sensory neurons as well as basal forebrain cholinergic neurons in the brain. Its relevance in the snake venom is not clear. However, it has been shown to inhibit metalloproteinase-dependent proteolysis of platelet glycoprotein Ib alpha, suggesting a metalloproteinase inhibition to prevent metalloprotease autodigestion and/or protection against prey proteases. Binds a lipid between the two protein chains in the homodimer. The lipid-bound form promotes histamine relase from mouse mast cells, contrary to the lipid-free form. This Oxyuranus scutellatus scutellatus (Australian taipan) protein is Venom nerve growth factor.